A 166-amino-acid chain; its full sequence is Probable chemoreceptor glutamine deamidase CheD (166 aa).

It belongs to the CheD family.

It catalyses the reaction L-glutaminyl-[protein] + H2O = L-glutamyl-[protein] + NH4(+). In terms of biological role, probably deamidates glutamine residues to glutamate on methyl-accepting chemotaxis receptors (MCPs), playing an important role in chemotaxis. In Clostridium acetobutylicum (strain ATCC 824 / DSM 792 / JCM 1419 / IAM 19013 / LMG 5710 / NBRC 13948 / NRRL B-527 / VKM B-1787 / 2291 / W), this protein is Probable chemoreceptor glutamine deamidase CheD.